A 163-amino-acid polypeptide reads, in one-letter code: Cytosolic iron-sulfur assembly component 2B (163 aa).

Belongs to the MIP18 family. Component of the CIA complex. Component of the MMXD complex, which includes CIAO1, ERCC2, CIAO2B, MMS19 and SLC25A5. Interacts with CIAO1, ERCC2 and MMS19; the interactions are direct. Interacts with KIF4A; the interaction facilitates the transfer of Fe-S clusters to KIF4A to ensure proper localization of KIF4A to the mitotic machinery. Interacts with CCDC117; the interaction is direct.

The protein resides in the nucleus. It is found in the cytoplasm. It localises to the cytoskeleton. The protein localises to the spindle. Functionally, component of the cytosolic iron-sulfur protein assembly (CIA) complex, a multiprotein complex that mediates the incorporation of iron-sulfur cluster into extramitochondrial Fe/S proteins. As a CIA complex component and in collaboration with CIAO1 and MMS19, binds to and facilitates the assembly of most cytosolic-nuclear Fe/S proteins. As part of the mitotic spindle-associated MMXD complex it plays a role in chromosome segregation, probably by facilitating iron-sulfur cluster assembly into ERCC2/XPD. Together with MMS19, facilitates the transfer of Fe-S clusters to the motor protein KIF4A, which ensures proper localization of KIF4A to mitotic machinery components to promote the progression of mitosis. The sequence is that of Cytosolic iron-sulfur assembly component 2B from Mus musculus (Mouse).